The following is a 176-amino-acid chain: CASP-like protein 5A1 (176 aa).

At 1 to 45 (MDASHPAVYPVGVPPTAVDPPPRVRMKDYEGMPSTLGGLVLRSGQ) the chain is on the cytoplasmic side. A helical transmembrane segment spans residues 46-66 (FACAVTALSIMISIPDFSSVT). A topological domain (extracellular) is located at residue Ala67. The chain crosses the membrane as a helical span at residues 68 to 88 (FCYLVAAMALQLLWSVSLAVV). Over 89–102 (DGYALLLRRTLHNP) the chain is Cytoplasmic. A helical membrane pass occupies residues 103 to 123 (VLLSLLVIGDWVTSTLSLAAA). Over 124–151 (CSSAGITVLIDSDLAQCAHNHCGRYEAA) the chain is Extracellular. A helical membrane pass occupies residues 152 to 172 (VAMAFLTWFLVSLSFFFSFWL). Over 173-176 (LATR) the chain is Cytoplasmic.

This sequence belongs to the Casparian strip membrane proteins (CASP) family. As to quaternary structure, homodimer and heterodimers.

It is found in the cell membrane. The protein is CASP-like protein 5A1 of Selaginella moellendorffii (Spikemoss).